Here is a 291-residue protein sequence, read N- to C-terminus: Asialoglycoprotein receptor 1 (291 aa).

Basic and acidic residues predominate over residues 1 to 19 (MTKECQDLQHLDNEESDHH). Residues 1-27 (MTKECQDLQHLDNEESDHHQLRKGPPP) are disordered. Residues 1–40 (MTKECQDLQHLDNEESDHHQLRKGPPPSQPLLQRLCSGPR) are Cytoplasmic-facing. Residues 5–8 (CQDL) carry the Endocytosis signal motif. Position 16 is a phosphoserine (Ser16). Cys36 is lipidated: S-palmitoyl cysteine. The chain crosses the membrane as a helical; Signal-anchor for type II membrane protein span at residues 41-61 (LLLLSLGLSLLLLVVVCVIGS). Residues 61 to 123 (SQNSQLQKEL…KDLSEDHSSL (63 aa)) adopt a coiled-coil conformation. Topologically, residues 62–291 (QNSQLQKELR…DKASQEPPLL (230 aa)) are extracellular. N-linked (GlcNAc...) asparagine glycans are attached at residues Asn79 and Asn147. Intrachain disulfides connect Cys154/Cys165, Cys182/Cys277, and Cys255/Cys269. Positions 161-278 (HERSCYWFSR…CQRPYRWVCE (118 aa)) constitute a C-type lectin domain. Residues Val191, Glu197, Asp216, Gln240, Asp242, Asp243, Glu253, Asp254, Asn265, Asp266, and Glu278 each coordinate Ca(2+). Position 285 is a phosphoserine (Ser285).

Interacts with LASS2. In terms of processing, phosphorylated on a cytoplasmic Ser residue.

The protein resides in the membrane. Its function is as follows. Mediates the endocytosis of plasma glycoproteins to which the terminal sialic acid residue on their complex carbohydrate moieties has been removed. The receptor recognizes terminal galactose and N-acetylgalactosamine units. After ligand binding to the receptor, the resulting complex is internalized and transported to a sorting organelle, where receptor and ligand are disassociated. The receptor then returns to the cell membrane surface. The sequence is that of Asialoglycoprotein receptor 1 (ASGR1) from Pongo abelii (Sumatran orangutan).